A 271-amino-acid polypeptide reads, in one-letter code: Phosphatidylinositol transfer protein beta isoform (271 aa).

N6-acetyllysine is present on K215. Residue S262 is modified to Phosphoserine.

The protein belongs to the PtdIns transfer protein family. PI transfer class I subfamily. Constitutive phosphorylation of Ser-262 has no effect on phospholipid transfer activity but is required for Golgi targeting. In terms of tissue distribution, widely expressed in various tissues including brain.

The protein resides in the golgi apparatus. The protein localises to the golgi apparatus membrane. It is found in the endoplasmic reticulum membrane. The enzyme catalyses a 1,2-diacyl-sn-glycero-3-phosphocholine(in) = a 1,2-diacyl-sn-glycero-3-phosphocholine(out). It catalyses the reaction a 1,2-diacyl-sn-glycero-3-phospho-(1D-myo-inositol)(in) = a 1,2-diacyl-sn-glycero-3-phospho-(1D-myo-inositol)(out). It carries out the reaction an N-(acyl)-sphingosylphosphocholine(in) = an N-(acyl)-sphingosylphosphocholine(out). Phosphatidylinositol transfer activity is inhibited by N-ethylmaleimide. In terms of biological role, catalyzes the transfer of phosphatidylinositol and phosphatidylcholine between membranes. Also catalyzes the transfer of sphingomyelin. Required for COPI-mediated retrograde transport from the Golgi to the endoplasmic reticulum; phosphatidylinositol and phosphatidylcholine transfer activity is essential for this function. The protein is Phosphatidylinositol transfer protein beta isoform (PITPNB) of Homo sapiens (Human).